The sequence spans 147 residues: Large ribosomal subunit protein bL9 (147 aa).

The protein belongs to the bacterial ribosomal protein bL9 family.

Its function is as follows. Binds to the 23S rRNA. The polypeptide is Large ribosomal subunit protein bL9 (Sulfurovum sp. (strain NBC37-1)).